Reading from the N-terminus, the 323-residue chain is Protoheme IX farnesyltransferase (323 aa).

Transmembrane regions (helical) follow at residues 50–70, 97–117, 118–138, 150–170, 184–204, 231–248, 252–274, and 293–313; these read IVLI…ANTF, NRDA…WLWL, LCDS…YIFV, NIVW…AVIV, AIVL…ALAM, IVWY…LIPA, IYAA…LHLG, and YLAV…ETIG.

It belongs to the UbiA prenyltransferase family. Protoheme IX farnesyltransferase subfamily.

Its subcellular location is the cell membrane. The enzyme catalyses heme b + (2E,6E)-farnesyl diphosphate + H2O = Fe(II)-heme o + diphosphate. The protein operates within porphyrin-containing compound metabolism; heme O biosynthesis; heme O from protoheme: step 1/1. Converts heme B (protoheme IX) to heme O by substitution of the vinyl group on carbon 2 of heme B porphyrin ring with a hydroxyethyl farnesyl side group. The polypeptide is Protoheme IX farnesyltransferase (Corynebacterium glutamicum (strain R)).